The following is a 121-amino-acid chain: Protein TusC (121 aa).

This sequence belongs to the DsrF/TusC family. Heterohexamer, formed by a dimer of trimers. The hexameric TusBCD complex contains 2 copies each of TusB, TusC and TusD. The TusBCD complex interacts with TusE.

Its subcellular location is the cytoplasm. Part of a sulfur-relay system required for 2-thiolation of 5-methylaminomethyl-2-thiouridine (mnm(5)s(2)U) at tRNA wobble positions. In Yersinia pestis bv. Antiqua (strain Antiqua), this protein is Protein TusC.